The following is a 954-amino-acid chain: Valine--tRNA ligase (954 aa).

A 'HIGH' region motif is present at residues 48–58; it reads PNVTGSLHMGH. The 'KMSKS' region signature appears at 560-564; the sequence is KMSKS. K563 contributes to the ATP binding site. The stretch at 886-954 forms a coiled coil; the sequence is INKDTELARL…RAQYLSIENL (69 aa).

It belongs to the class-I aminoacyl-tRNA synthetase family. ValS type 1 subfamily. In terms of assembly, monomer.

The protein resides in the cytoplasm. It catalyses the reaction tRNA(Val) + L-valine + ATP = L-valyl-tRNA(Val) + AMP + diphosphate. Functionally, catalyzes the attachment of valine to tRNA(Val). As ValRS can inadvertently accommodate and process structurally similar amino acids such as threonine, to avoid such errors, it has a 'posttransfer' editing activity that hydrolyzes mischarged Thr-tRNA(Val) in a tRNA-dependent manner. This Mannheimia succiniciproducens (strain KCTC 0769BP / MBEL55E) protein is Valine--tRNA ligase.